The sequence spans 315 residues: MTQKLPLALFLMGPTASGKTDLAIRLRQKYPVEIISVDSALIYRGMDIGTAKPDAQELALAPHRLIDILDPSEAYSAADFRRDALKEMADIVAQGKIPLLVGGTMLYFKALLEGLSPLPAADPVIRQQIELEAEKLGWQALHDQLQQIDPVSAQRIHPNDPQRLSRALEVYRISGKTLTELTQTKGEAIPYRVLQFAIAPKERAELHRRIELRFEKMVESGFEEEVKALYARDDLHPDLPSIRCVGYRQMWDYLDGHGTLDEAIYRGICATRQLAKRQITWLRSWDDLTWLDSENVDQAVETLSNAIASNEISCV.

Position 13–20 (13–20) interacts with ATP; sequence GPTASGKT. 15 to 20 is a substrate binding site; sequence TASGKT. Interaction with substrate tRNA stretches follow at residues 38 to 41, 162 to 166, 243 to 248, and 276 to 283; these read DSAL, QRLSR, RCVGYR, and KRQITWLR.

Belongs to the IPP transferase family. Monomer. Requires Mg(2+) as cofactor.

It carries out the reaction adenosine(37) in tRNA + dimethylallyl diphosphate = N(6)-dimethylallyladenosine(37) in tRNA + diphosphate. Catalyzes the transfer of a dimethylallyl group onto the adenine at position 37 in tRNAs that read codons beginning with uridine, leading to the formation of N6-(dimethylallyl)adenosine (i(6)A). This Vibrio cholerae serotype O1 (strain ATCC 39541 / Classical Ogawa 395 / O395) protein is tRNA dimethylallyltransferase.